Here is a 557-residue protein sequence, read N- to C-terminus: Formate--tetrahydrofolate ligase (557 aa).

Position 66–73 (66–73) interacts with ATP; it reads TPAGEGKT.

The protein belongs to the formate--tetrahydrofolate ligase family.

The catalysed reaction is (6S)-5,6,7,8-tetrahydrofolate + formate + ATP = (6R)-10-formyltetrahydrofolate + ADP + phosphate. The protein operates within one-carbon metabolism; tetrahydrofolate interconversion. This chain is Formate--tetrahydrofolate ligase, found in Bartonella tribocorum (strain CIP 105476 / IBS 506).